A 479-amino-acid polypeptide reads, in one-letter code: MAQHTVYFPDAFLTQMREAMPSTLSFDDFLAACQRPLRRSIRVNTLKISVADFLQLTAPYGWTLTPIPWCEEGFWIERDNEDALPLGSTTEHLSGLFYIQEASSMLPVAALFADGNAPQRVMDVAAAPGSKTTQIAARMNNEGAILANEFSASWVKVLHANISRCGISNVALTHFGGRVFGAAVPEMFDAILLDAPCSGEGVVRKDPDALKNWSPESNQEIAATQRELIDSAFHALRPGGTLVYSTCTLNREENEAVCRWLKETYPDEVEFLPLGDLFPGANKALTEEGFLHVFPQIYDCEGFFVARLRKTQAIPALPAPKYKVGNFPFSPVKDREAGQIRQAAASVGLNWDGNLRLWQRDKELWLFPVGIEALIGKVRFSRLGIKLAETHNKGYRWQHEAVIAHASPDNVNAFELTPQEAEEWYRGRDVYPQAAPVADDVLVTFQHQPIGLAKRIGSRLKNSYPRELVRDGKLFTSNA.

S-adenosyl-L-methionine is bound by residues 125-131, glutamate 149, glycine 177, and aspartate 194; that span reads AAAPGSK. Cysteine 247 acts as the Nucleophile in catalysis.

The protein belongs to the class I-like SAM-binding methyltransferase superfamily. RsmB/NOP family.

Its subcellular location is the cytoplasm. It catalyses the reaction cytidine(1407) in 16S rRNA + S-adenosyl-L-methionine = 5-methylcytidine(1407) in 16S rRNA + S-adenosyl-L-homocysteine + H(+). Its function is as follows. Specifically methylates the cytosine at position 1407 (m5C1407) of 16S rRNA. The chain is Ribosomal RNA small subunit methyltransferase F from Shigella flexneri serotype 5b (strain 8401).